The sequence spans 149 residues: MAGRNAINKPKIKMLAQSHARSLSRKRAARSSVQTRSSTSRYASKSLTAPRPTDSKSLALYTGETPLSQSVMTTNTLSKKRAKKIARNQKYLSQKQEDELMMDMDKQMKEKSRLDKVKKALWDLIENFEKNGPTVLPTGEGTTLGVQSF.

Positions 1 to 58 (MAGRNAINKPKIKMLAQSHARSLSRKRAARSSVQTRSSTSRYASKSLTAPRPTDSKSL) are disordered. A compositionally biased stretch (low complexity) spans 30 to 41 (RSSVQTRSSTSR).

This sequence belongs to the ALB1 family. In terms of assembly, component of the nucleoplasmic and cytoplasmic pre-60S ribosomal particles.

Its subcellular location is the cytoplasm. The protein localises to the nucleus. Its function is as follows. Involved in proper assembly of pre-ribosomal particles during the biogenesis of the 60S ribosomal subunit. Accompanies the pre-60S particles to the cytoplasm. The polypeptide is Ribosome biogenesis protein ALB1 (ALB1) (Lodderomyces elongisporus (strain ATCC 11503 / CBS 2605 / JCM 1781 / NBRC 1676 / NRRL YB-4239) (Yeast)).